We begin with the raw amino-acid sequence, 403 residues long: Phosphopentomutase (403 aa).

Residues Asp-13, Asp-298, His-303, Asp-339, His-340, and His-351 each contribute to the Mn(2+) site.

The protein belongs to the phosphopentomutase family. Mn(2+) is required as a cofactor.

Its subcellular location is the cytoplasm. The enzyme catalyses 2-deoxy-alpha-D-ribose 1-phosphate = 2-deoxy-D-ribose 5-phosphate. It catalyses the reaction alpha-D-ribose 1-phosphate = D-ribose 5-phosphate. The protein operates within carbohydrate degradation; 2-deoxy-D-ribose 1-phosphate degradation; D-glyceraldehyde 3-phosphate and acetaldehyde from 2-deoxy-alpha-D-ribose 1-phosphate: step 1/2. Functionally, isomerase that catalyzes the conversion of deoxy-ribose 1-phosphate (dRib-1-P) and ribose 1-phosphate (Rib-1-P) to deoxy-ribose 5-phosphate (dRib-5-P) and ribose 5-phosphate (Rib-5-P), respectively. This chain is Phosphopentomutase, found in Streptococcus suis (strain 05ZYH33).